Reading from the N-terminus, the 437-residue chain is Phosphomethylpyrimidine synthase (437 aa).

Substrate is bound by residues Asn69, Met98, Tyr127, His163, 185–187 (SRG), 226–229 (DACR), and Glu265. Zn(2+) is bound at residue His269. Tyr292 serves as a coordination point for substrate. His333 contributes to the Zn(2+) binding site. [4Fe-4S] cluster contacts are provided by Cys409, Cys412, and Cys416.

This sequence belongs to the ThiC family. It depends on [4Fe-4S] cluster as a cofactor.

The enzyme catalyses 5-amino-1-(5-phospho-beta-D-ribosyl)imidazole + S-adenosyl-L-methionine = 4-amino-2-methyl-5-(phosphooxymethyl)pyrimidine + CO + 5'-deoxyadenosine + formate + L-methionine + 3 H(+). The protein operates within cofactor biosynthesis; thiamine diphosphate biosynthesis. In terms of biological role, catalyzes the synthesis of the hydroxymethylpyrimidine phosphate (HMP-P) moiety of thiamine from aminoimidazole ribotide (AIR) in a radical S-adenosyl-L-methionine (SAM)-dependent reaction. This Clostridium botulinum (strain ATCC 19397 / Type A) protein is Phosphomethylpyrimidine synthase.